A 172-amino-acid polypeptide reads, in one-letter code: Adenylate kinase isoenzyme 6 (172 aa).

Gly-13, Gly-15, Lys-16, Thr-17, and Thr-18 together coordinate ATP. The tract at residues 33–56 is NMPbind; that stretch reads NVGDLAREGHLYDGYDEEYGCPIL. Residues 108–118 are LID; sequence TRGYHEKKLQD. An ATP-binding site is contributed by Arg-109.

This sequence belongs to the adenylate kinase family. AK6 subfamily. As to quaternary structure, monomer and homodimer. Interacts with small ribosomal subunit protein uS11. Not a structural component of 43S pre-ribosomes, but transiently interacts with them by binding to uS11. Interacts with COIL (via C-terminus).

Its subcellular location is the cytoplasm. The protein localises to the nucleus. It is found in the nucleoplasm. It localises to the cajal body. It catalyses the reaction AMP + ATP = 2 ADP. It carries out the reaction ATP + H2O = ADP + phosphate + H(+). Functionally, broad-specificity nucleoside monophosphate (NMP) kinase that catalyzes the reversible transfer of the terminal phosphate group between nucleoside triphosphates and monophosphates. Also has ATPase activity. Involved in the late cytoplasmic maturation steps of the 40S ribosomal particles, specifically 18S rRNA maturation. While NMP activity is not required for ribosome maturation, ATPase activity is. Associates transiently with small ribosomal subunit protein uS11. ATP hydrolysis breaks the interaction with uS11. May temporarily remove uS11 from the ribosome to enable a conformational change of the ribosomal RNA that is needed for the final maturation step of the small ribosomal subunit. Its NMP activity may have a role in nuclear energy homeostasis. May be involved in regulation of Cajal body (CB) formation. The chain is Adenylate kinase isoenzyme 6 from Rattus norvegicus (Rat).